The sequence spans 805 residues: U-box domain-containing protein 32 (805 aa).

2 disordered regions span residues 181–205 and 226–284; these read SNNR…SEKL and EKDT…EREG. Over residues 226-239 the composition is skewed to basic and acidic residues; sequence EKDTGQLEREKVEP. Residues 245 to 257 show a composition bias toward low complexity; the sequence is FSSGSSSSFGEPV. Residues 331-434 are a coiled coil; sequence LEGLCIKESS…EVNALRRLVK (104 aa). The 259-residue stretch at 460–718 folds into the Protein kinase domain; sequence FDPSWKLGEG…FIDRMKAPEV (259 aa). ATP-binding positions include 466–474 and Lys487; that span reads LGEGKYGSV. In terms of domain architecture, U-box spans 734-805; the sequence is RPPSHYLCPI…LAIQDWQNQW (72 aa).

Belongs to the protein kinase superfamily. Ser/Thr protein kinase family.

It catalyses the reaction S-ubiquitinyl-[E2 ubiquitin-conjugating enzyme]-L-cysteine + [acceptor protein]-L-lysine = [E2 ubiquitin-conjugating enzyme]-L-cysteine + N(6)-ubiquitinyl-[acceptor protein]-L-lysine.. It participates in protein modification; protein ubiquitination. In terms of biological role, functions as an E3 ubiquitin ligase. The sequence is that of U-box domain-containing protein 32 (PUB32) from Arabidopsis thaliana (Mouse-ear cress).